A 312-amino-acid polypeptide reads, in one-letter code: Ribosomal protein L11 methyltransferase (312 aa).

Positions 163, 184, 206, and 248 each coordinate S-adenosyl-L-methionine.

Belongs to the methyltransferase superfamily. PrmA family.

The protein resides in the cytoplasm. It carries out the reaction L-lysyl-[protein] + 3 S-adenosyl-L-methionine = N(6),N(6),N(6)-trimethyl-L-lysyl-[protein] + 3 S-adenosyl-L-homocysteine + 3 H(+). Methylates ribosomal protein L11. This Clostridium kluyveri (strain NBRC 12016) protein is Ribosomal protein L11 methyltransferase.